A 669-amino-acid chain; its full sequence is DNA ligase (669 aa).

Residues 35–39 (DSVYD), 84–85 (SL), and Glu-116 each bind NAD(+). Lys-118 acts as the N6-AMP-lysine intermediate in catalysis. 4 residues coordinate NAD(+): Arg-139, Glu-176, Lys-291, and Lys-315. Residues Cys-409, Cys-412, Cys-427, and Cys-432 each coordinate Zn(2+). The 79-residue stretch at 591-669 (TTKATLAGKT…EAQLLELIKA (79 aa)) folds into the BRCT domain.

Belongs to the NAD-dependent DNA ligase family. LigA subfamily. Requires Mg(2+) as cofactor. It depends on Mn(2+) as a cofactor.

It catalyses the reaction NAD(+) + (deoxyribonucleotide)n-3'-hydroxyl + 5'-phospho-(deoxyribonucleotide)m = (deoxyribonucleotide)n+m + AMP + beta-nicotinamide D-nucleotide.. Its function is as follows. DNA ligase that catalyzes the formation of phosphodiester linkages between 5'-phosphoryl and 3'-hydroxyl groups in double-stranded DNA using NAD as a coenzyme and as the energy source for the reaction. It is essential for DNA replication and repair of damaged DNA. The polypeptide is DNA ligase (Microcystis aeruginosa (strain NIES-843 / IAM M-2473)).